A 269-amino-acid polypeptide reads, in one-letter code: Phosphate import ATP-binding protein PstB 1 (269 aa).

Residues 25–264 (LSTEDLHVFY…PQVDLTNDYI (240 aa)) form the ABC transporter domain. Residue 57 to 64 (GPSGSGKS) participates in ATP binding.

This sequence belongs to the ABC transporter superfamily. Phosphate importer (TC 3.A.1.7) family. As to quaternary structure, the complex is composed of two ATP-binding proteins (PstB), two transmembrane proteins (PstC and PstA) and a solute-binding protein (PstS).

The protein localises to the cell membrane. It catalyses the reaction phosphate(out) + ATP + H2O = ADP + 2 phosphate(in) + H(+). Part of the ABC transporter complex PstSACB involved in phosphate import. Responsible for energy coupling to the transport system. The polypeptide is Phosphate import ATP-binding protein PstB 1 (Lactiplantibacillus plantarum (strain ATCC BAA-793 / NCIMB 8826 / WCFS1) (Lactobacillus plantarum)).